Here is a 126-residue protein sequence, read N- to C-terminus: Histone H2B 5 (126 aa).

The segment covering 1 to 12 (MPEPAKSAPAPK) has biased composition (low complexity). The interval 1–35 (MPEPAKSAPAPKKGSKKAVTKTQKKGDKKRRKSRK) is disordered. Residues Lys6 and Lys13 each carry the N6-acetyllysine modification. Residues 13-34 (KGSKKAVTKTQKKGDKKRRKSR) show a composition bias toward basic residues. Position 15 is a phosphoserine (Ser15). An N6-acetyllysine mark is found at Lys16 and Lys21. Ser113 carries an O-linked (GlcNAc) serine glycan. Lys121 participates in a covalent cross-link: Glycyl lysine isopeptide (Lys-Gly) (interchain with G-Cter in ubiquitin).

It belongs to the histone H2B family. As to quaternary structure, the nucleosome is a histone octamer containing two molecules each of H2A, H2B, H3 and H4 assembled in one H3-H4 heterotetramer and two H2A-H2B heterodimers. The octamer wraps approximately 147 bp of DNA. Post-translationally, monoubiquitination of Lys-121 by the BRE1 gives a specific tag for epigenetic transcriptional activation and is also prerequisite for histone H3 'Lys-4' and 'Lys-79' methylation. Phosphorylated on Ser-15 during apoptosis; which facilitates apoptotic chromatin condensation. In terms of processing, glcNAcylation at Ser-113 promotes monoubiquitination of Lys-121. It fluctuates in response to extracellular glucose, and associates with transcribed genes.

The protein localises to the nucleus. Its subcellular location is the chromosome. Its function is as follows. Core component of nucleosome. Nucleosomes wrap and compact DNA into chromatin, limiting DNA accessibility to the cellular machineries which require DNA as a template. Histones thereby play a central role in transcription regulation, DNA repair, DNA replication and chromosomal stability. DNA accessibility is regulated via a complex set of post-translational modifications of histones, also called histone code, and nucleosome remodeling. The sequence is that of Histone H2B 5 (H2B-V) from Gallus gallus (Chicken).